A 298-amino-acid chain; its full sequence is Diphthine methyl ester synthase (298 aa).

S-adenosyl-L-methionine contacts are provided by residues Leu9, Asp85, Gly88, 113–114, Leu164, Leu222, and His247; that span reads SV.

It belongs to the diphthine synthase family.

It is found in the cytoplasm. The enzyme catalyses 2-[(3S)-amino-3-carboxypropyl]-L-histidyl-[translation elongation factor 2] + 4 S-adenosyl-L-methionine = diphthine methyl ester-[translation elongation factor 2] + 4 S-adenosyl-L-homocysteine + 3 H(+). It participates in protein modification; peptidyl-diphthamide biosynthesis. In terms of biological role, S-adenosyl-L-methionine-dependent methyltransferase that catalyzes four methylations of the modified target histidine residue in translation elongation factor 2 (EF-2), to form an intermediate called diphthine methyl ester. The four successive methylation reactions represent the second step of diphthamide biosynthesis. This is Diphthine methyl ester synthase (DPH5) from Candida glabrata (strain ATCC 2001 / BCRC 20586 / JCM 3761 / NBRC 0622 / NRRL Y-65 / CBS 138) (Yeast).